Consider the following 466-residue polypeptide: Amino acid permease 4 (466 aa).

The Cytoplasmic portion of the chain corresponds to 1–22 (MDVPRPAFKCFDDDGRLKRSGT). Helical transmembrane passes span 23–43 (VWTASAHIITAVIGSGVLSLA) and 44–64 (WAIGQLGWIAGPTVMLLFSFV). Over 65–111 (TYYSSTLLSDCYRTGDPVSGKRNYTYMDAVRSILGGFRFKICGLIQY) the chain is Cytoplasmic. A helical membrane pass occupies residues 112–132 (LNLFGITVGYTIAASISMMAI). The Extracellular segment spans residues 133 to 177 (KRSNCFHESGGKNPCHMSSNPYMIMFGVTEILLSQIKDFDQIWWL). A helical membrane pass occupies residues 178-198 (SIVAAIMSFTYSAIGLALGII). Residues 199 to 226 (QVAANGVVKGSLTGISIGAVTQTQKIWR) are Cytoplasmic-facing. Residues 227-247 (TFQALGDIAFAYSYSVVLIEI) form a helical membrane-spanning segment. The Extracellular portion of the chain corresponds to 248–266 (QDTVRSPPAESKTMKIATR). A helical transmembrane segment spans residues 267–287 (ISIAVTTTFYMLCGCMGYAAF). Residues 288–290 (GDK) are Cytoplasmic-facing. The chain crosses the membrane as a helical span at residues 291–311 (APGNLLTGFGFYNPFWLLDVA). Topologically, residues 312–313 (NA) are extracellular. The helical transmembrane segment at 314 to 334 (AIVIHLVGAYQVFAQPIFAFI) threads the bilayer. At 335-369 (EKQAAARFPDSDLVTKEYEIRIPGFRSPYKVNVFR) the chain is on the cytoplasmic side. Residues 370–390 (AVYRSGFVVLTTVISMLMPFF) form a helical membrane-spanning segment. The Extracellular segment spans residues 391-392 (ND). The helical transmembrane segment at 393–413 (VVGILGALGFWPLTVYFPVEM) threads the bilayer. Residues 414–435 (YIRQRKVERWSMKWVCLQMLSC) are Cytoplasmic-facing. A helical membrane pass occupies residues 436–456 (GCLMITLVAGVGSIAGVMLDL). Residues 457-466 (KVYKPFKTTY) are Extracellular-facing.

Belongs to the amino acid/polyamine transporter 2 family. Amino acid/auxin permease (AAAP) (TC 2.A.18.2) subfamily. Expressed in leaves, stems and flowers.

The protein localises to the cell membrane. With respect to regulation, inhibited by 2,4-dinitrophenol. Functionally, amino acid-proton symporter. Stereospecific transporter with a broad specificity for neutral amino acids, favoring small amino acids such as alanine, asparagine and glutamine. Also accepts large aromatic residues such as in phenlalanine or tyrosine. This Arabidopsis thaliana (Mouse-ear cress) protein is Amino acid permease 4 (AAP4).